The following is a 2207-amino-acid chain: DNA polymerase epsilon catalytic subunit A (2207 aa).

3 disordered regions span residues 1–20 (MPSR…AASF), 1201–1233 (SMEK…PFAS), and 1934–1961 (RPES…ENEE). Zn(2+) contacts are provided by Cys-2075, Cys-2078, Cys-2113, and Cys-2116. The CysA-type zinc finger occupies 2075–2116 (CSACCLIRDLDLCRDEDVLPERGSGSGPDSATSSRPWCCPFC). The [4Fe-4S] cluster site is built by Cys-2147, Cys-2150, Cys-2162, and Cys-2164. Residues 2147-2164 (CSKCGTLKISEFMEHCSC) carry the CysB motif motif.

This sequence belongs to the DNA polymerase type-B family. As to quaternary structure, heterotetramer. Consists of 4 subunits: pol2, dpb2, dpb3 and dpb4. [4Fe-4S] cluster serves as cofactor.

The protein localises to the nucleus. The catalysed reaction is DNA(n) + a 2'-deoxyribonucleoside 5'-triphosphate = DNA(n+1) + diphosphate. In terms of biological role, DNA polymerase II participates in chromosomal DNA replication. The polypeptide is DNA polymerase epsilon catalytic subunit A (pol2) (Emericella nidulans (strain FGSC A4 / ATCC 38163 / CBS 112.46 / NRRL 194 / M139) (Aspergillus nidulans)).